The following is a 374-amino-acid chain: Cell division protein DivIB (374 aa).

The tract at residues 1–90 (MWKISNENDI…EEEHFADRLP (90 aa)) is disordered. Over 1-103 (MWKISNENDI…KTRNKRLYRR (103 aa)) the chain is Cytoplasmic. Residues 39–53 (YLKKQAEEAASKGEN) show a composition bias toward basic and acidic residues. Polar residues predominate over residues 56 to 75 (AEVTITLQEQSQEEPQQHLP). Residues 104 to 124 (LAFILTCLGTAILVALYFVSP) form a helical membrane-spanning segment. Over 125-374 (LSRLSEVTVS…GENQEVQQAE (250 aa)) the chain is Extracellular. One can recognise a POTRA domain in the interval 126-197 (SRLSEVTVSG…NSFKIDIQEY (72 aa)). Residues 325-374 (KESEETGSEVSEDSAVENQEVVDPNAGVATDEANNGTPTNGENQEVQQAE) form a disordered region. The segment covering 326–339 (ESEETGSEVSEDSA) has biased composition (acidic residues). Over residues 356-374 (EANNGTPTNGENQEVQQAE) the composition is skewed to polar residues.

The protein belongs to the FtsQ/DivIB family. DivIB subfamily.

The protein localises to the cell membrane. Cell division protein that may be involved in stabilizing or promoting the assembly of the division complex. This chain is Cell division protein DivIB, found in Enterococcus faecalis (strain ATCC 700802 / V583).